The following is a 181-amino-acid chain: ADP-ribosylation factor 2 (181 aa).

Gly2 carries N-myristoyl glycine lipidation. Residues Gly24 to Thr31, Asp67 to Gln71, and Asn126 to Asp129 contribute to the GTP site.

It belongs to the small GTPase superfamily. Arf family.

The protein localises to the golgi apparatus. Functionally, GTP-binding protein that functions as an allosteric activator of the cholera toxin catalytic subunit, an ADP-ribosyltransferase. Involved in protein trafficking; may modulate vesicle budding and uncoating within the Golgi apparatus. This is ADP-ribosylation factor 2 (ARF2) from Bos taurus (Bovine).